The primary structure comprises 209 residues: Thiamine-phosphate synthase (209 aa).

4-amino-2-methyl-5-(diphosphooxymethyl)pyrimidine is bound by residues 39 to 43 and N71; that span reads QLREK. 2 residues coordinate Mg(2+): D72 and D91. 4-amino-2-methyl-5-(diphosphooxymethyl)pyrimidine is bound at residue S110. 136–138 is a 2-[(2R,5Z)-2-carboxy-4-methylthiazol-5(2H)-ylidene]ethyl phosphate binding site; the sequence is TGT. Position 139 (K139) interacts with 4-amino-2-methyl-5-(diphosphooxymethyl)pyrimidine. Residues G166 and 186-187 each bind 2-[(2R,5Z)-2-carboxy-4-methylthiazol-5(2H)-ylidene]ethyl phosphate; that span reads VS.

The protein belongs to the thiamine-phosphate synthase family. Mg(2+) serves as cofactor.

It carries out the reaction 2-[(2R,5Z)-2-carboxy-4-methylthiazol-5(2H)-ylidene]ethyl phosphate + 4-amino-2-methyl-5-(diphosphooxymethyl)pyrimidine + 2 H(+) = thiamine phosphate + CO2 + diphosphate. It catalyses the reaction 2-(2-carboxy-4-methylthiazol-5-yl)ethyl phosphate + 4-amino-2-methyl-5-(diphosphooxymethyl)pyrimidine + 2 H(+) = thiamine phosphate + CO2 + diphosphate. The catalysed reaction is 4-methyl-5-(2-phosphooxyethyl)-thiazole + 4-amino-2-methyl-5-(diphosphooxymethyl)pyrimidine + H(+) = thiamine phosphate + diphosphate. It functions in the pathway cofactor biosynthesis; thiamine diphosphate biosynthesis; thiamine phosphate from 4-amino-2-methyl-5-diphosphomethylpyrimidine and 4-methyl-5-(2-phosphoethyl)-thiazole: step 1/1. In terms of biological role, condenses 4-methyl-5-(beta-hydroxyethyl)thiazole monophosphate (THZ-P) and 2-methyl-4-amino-5-hydroxymethyl pyrimidine pyrophosphate (HMP-PP) to form thiamine monophosphate (TMP). This Clostridium beijerinckii (strain ATCC 51743 / NCIMB 8052) (Clostridium acetobutylicum) protein is Thiamine-phosphate synthase.